The following is a 428-amino-acid chain: Tyrosine--tRNA ligase (428 aa).

Tyr41 lines the L-tyrosine pocket. The short motif at 46–55 is the 'HIGH' region element; it reads PTADSLHLGH. Residues Tyr179 and Gln183 each contribute to the L-tyrosine site. The 'KMSKS' region signature appears at 239–243; sequence KFGKT. Lys242 serves as a coordination point for ATP. In terms of domain architecture, S4 RNA-binding spans 361–418; that stretch reads TDLMQALVDAELQPSRGQARKTIASNAVTINGEKQSDPEYIFNDEDRLFGRYTLLRRG.

Belongs to the class-I aminoacyl-tRNA synthetase family. TyrS type 1 subfamily. As to quaternary structure, homodimer.

It is found in the cytoplasm. It catalyses the reaction tRNA(Tyr) + L-tyrosine + ATP = L-tyrosyl-tRNA(Tyr) + AMP + diphosphate + H(+). Its function is as follows. Catalyzes the attachment of tyrosine to tRNA(Tyr) in a two-step reaction: tyrosine is first activated by ATP to form Tyr-AMP and then transferred to the acceptor end of tRNA(Tyr). The sequence is that of Tyrosine--tRNA ligase from Salmonella arizonae (strain ATCC BAA-731 / CDC346-86 / RSK2980).